Reading from the N-terminus, the 312-residue chain is Oxidoreductase NAD-binding domain-containing protein 1 (312 aa).

The signal sequence occupies residues 1–17; the sequence is MACAAVMIPGLLRCSVG. In terms of domain architecture, FAD-binding FR-type spans 50–186; it reads HMERTASVLR…GGVGINPLLS (137 aa). 178 to 183 lines the NAD(+) pocket; it reads GVGINP.

The sequence is that of Oxidoreductase NAD-binding domain-containing protein 1 (OXNAD1) from Homo sapiens (Human).